The sequence spans 392 residues: Integrin-linked kinase-associated serine/threonine phosphatase 2C (392 aa).

Position 1 is an N-acetylmethionine (Met-1). Residues 1–91 (MDLFGDLPEP…PEEEKNGGEE (91 aa)) form a disordered region. Over residues 56–70 (SGNSGSLATSGSQVV) the composition is skewed to polar residues. Residues 72–91 (TEGKGAKRKAPEEEKNGGEE) show a composition bias toward basic and acidic residues. The region spanning 108–390 (KGYVAERKGE…DNVTVMVVRI (283 aa)) is the PPM-type phosphatase domain. Mn(2+)-binding residues include Asp-152 and Gly-153. Lys-210 is modified (N6-acetyllysine). Mn(2+) is bound by residues Asp-326 and Asp-381.

It belongs to the PP2C family. As to quaternary structure, interacts with ILK. It depends on Mg(2+) as a cofactor. Mn(2+) is required as a cofactor.

It localises to the cytoplasm. The catalysed reaction is O-phospho-L-seryl-[protein] + H2O = L-seryl-[protein] + phosphate. It catalyses the reaction O-phospho-L-threonyl-[protein] + H2O = L-threonyl-[protein] + phosphate. In terms of biological role, protein phosphatase that may play a role in regulation of cell cycle progression via dephosphorylation of its substrates whose appropriate phosphorylation states might be crucial for cell proliferation. Selectively associates with integrin linked kinase (ILK), to modulate cell adhesion and growth factor signaling. Inhibits the ILK-GSK3B signaling axis and may play an important role in inhibiting oncogenic transformation. The chain is Integrin-linked kinase-associated serine/threonine phosphatase 2C (Ilkap) from Mus musculus (Mouse).